The chain runs to 117 residues: Photosystem II reaction center Psb28 protein (117 aa).

This sequence belongs to the Psb28 family. Part of the photosystem II complex.

Its subcellular location is the cellular thylakoid membrane. This is Photosystem II reaction center Psb28 protein from Prochlorococcus marinus (strain MIT 9515).